Here is a 227-residue protein sequence, read N- to C-terminus: Extracellular small neutral protease (227 aa).

An N-terminal signal peptide occupies residues 1-29; it reads MRITLPLLSTAVGLGLTAAVLGTGPAATA. A propeptide spanning residues 30–42 is cleaved from the precursor; that stretch reads AAPQEPVRAAQLG. Ca(2+)-binding residues include Asp156 and Thr158. His163 provides a ligand contact to Zn(2+). Residue Glu164 is part of the active site. Zn(2+)-binding residues include His167 and Asp173. Cys179 and Cys192 are oxidised to a cystine.

It belongs to the peptidase M7 family. Ca(2+) serves as cofactor. Zn(2+) is required as a cofactor. Post-translationally, the N-terminus is blocked.

The protein localises to the secreted. The enzyme catalyses Hydrolyzes proteins with a preference for Tyr or Phe in the P1' position. Has no action on amino-acid p-nitroanilides.. In Streptomyces lividans, this protein is Extracellular small neutral protease (snpA).